The chain runs to 275 residues: Large ribosomal subunit protein uL2cz (275 aa).

Disordered stretches follow at residues 1 to 22 and 226 to 275; these read MAIH…DSQV and NPVD…RRRK.

This sequence belongs to the universal ribosomal protein uL2 family. In terms of assembly, part of the 50S ribosomal subunit.

The protein resides in the plastid. Its subcellular location is the chloroplast. The chain is Large ribosomal subunit protein uL2cz (rpl2-A) from Chloranthus spicatus (Chulantree).